The sequence spans 327 residues: MQNVLKSFLTPKNIQVQTISPCHFRILLEPLERGFGHTLGNALRRILLSSMPGAAIVQAEIDGVLHEYSSIEGVREDVVDVLLNLKGVAIKLEGREDAKLTLHKKGAGTVTAGDIQTESGVKIVNPDHVIAHITKDGEINMTLKAAMGRGYEPSSARSTGDQSRSVGLLLLDASYSPIRRVTYSVENARVEKRTDLDKLIIDLETDGTLDPEEAIRFAAAVLQHQLAAFVDLKQESDRDGGGKEGKVNPLLLRPVEDLELTVRAANCLKAESINYIGDLVQCTENDLLKTPNLGKKSLLEIKSVLAQKGLSLGMDLKGWPPADLTDQ.

Residues 1–233 (MQNVLKSFLT…HQLAAFVDLK (233 aa)) are alpha N-terminal domain (alpha-NTD). An alpha C-terminal domain (alpha-CTD) region spans residues 247–327 (VNPLLLRPVE…GWPPADLTDQ (81 aa)).

This sequence belongs to the RNA polymerase alpha chain family. In terms of assembly, homodimer. The RNAP catalytic core consists of 2 alpha, 1 beta, 1 beta' and 1 omega subunit. When a sigma factor is associated with the core the holoenzyme is formed, which can initiate transcription.

The catalysed reaction is RNA(n) + a ribonucleoside 5'-triphosphate = RNA(n+1) + diphosphate. Functionally, DNA-dependent RNA polymerase catalyzes the transcription of DNA into RNA using the four ribonucleoside triphosphates as substrates. This is DNA-directed RNA polymerase subunit alpha from Coxiella burnetii (strain CbuK_Q154) (Coxiella burnetii (strain Q154)).